Here is a 509-residue protein sequence, read N- to C-terminus: tRNA-2-methylthio-N(6)-dimethylallyladenosine synthase (509 aa).

A compositionally biased stretch (polar residues) spans 1 to 15; sequence MNEQQRLASQQVNSS. A disordered region spans residues 1–26; sequence MNEQQRLASQQVNSSTKKEEKDYSKY. A compositionally biased stretch (basic and acidic residues) spans 16–25; the sequence is TKKEEKDYSK. The region spanning 66-184 is the MTTase N-terminal domain; it reads RKFYIRTYGC…LPYILKDAMF (119 aa). Residues Cys-75, Cys-111, Cys-145, Cys-221, Cys-225, and Cys-228 each coordinate [4Fe-4S] cluster. The Radical SAM core domain occupies 207-437; the sequence is RRGDIKAWVN…NALVNKLAIE (231 aa). Residues 440–503 form the TRAM domain; that stretch reads DRYKGQIVEV…TWSLNGELVE (64 aa).

It belongs to the methylthiotransferase family. MiaB subfamily. In terms of assembly, monomer. It depends on [4Fe-4S] cluster as a cofactor.

It localises to the cytoplasm. It carries out the reaction N(6)-dimethylallyladenosine(37) in tRNA + (sulfur carrier)-SH + AH2 + 2 S-adenosyl-L-methionine = 2-methylsulfanyl-N(6)-dimethylallyladenosine(37) in tRNA + (sulfur carrier)-H + 5'-deoxyadenosine + L-methionine + A + S-adenosyl-L-homocysteine + 2 H(+). In terms of biological role, catalyzes the methylthiolation of N6-(dimethylallyl)adenosine (i(6)A), leading to the formation of 2-methylthio-N6-(dimethylallyl)adenosine (ms(2)i(6)A) at position 37 in tRNAs that read codons beginning with uridine. This chain is tRNA-2-methylthio-N(6)-dimethylallyladenosine synthase, found in Bacillus thuringiensis (strain Al Hakam).